A 273-amino-acid polypeptide reads, in one-letter code: 3-methyl-2-oxobutanoate hydroxymethyltransferase (273 aa).

Mg(2+) is bound by residues aspartate 53 and aspartate 92. 3-methyl-2-oxobutanoate is bound by residues 53 to 54 (DS), aspartate 92, and lysine 122. Glutamate 124 is a binding site for Mg(2+). Catalysis depends on glutamate 191, which acts as the Proton acceptor.

Belongs to the PanB family. As to quaternary structure, homodecamer; pentamer of dimers. Mg(2+) is required as a cofactor.

The protein localises to the cytoplasm. The enzyme catalyses 3-methyl-2-oxobutanoate + (6R)-5,10-methylene-5,6,7,8-tetrahydrofolate + H2O = 2-dehydropantoate + (6S)-5,6,7,8-tetrahydrofolate. It functions in the pathway cofactor biosynthesis; (R)-pantothenate biosynthesis; (R)-pantoate from 3-methyl-2-oxobutanoate: step 1/2. Its function is as follows. Catalyzes the reversible reaction in which hydroxymethyl group from 5,10-methylenetetrahydrofolate is transferred onto alpha-ketoisovalerate to form ketopantoate. This Bacteroides fragilis (strain ATCC 25285 / DSM 2151 / CCUG 4856 / JCM 11019 / LMG 10263 / NCTC 9343 / Onslow / VPI 2553 / EN-2) protein is 3-methyl-2-oxobutanoate hydroxymethyltransferase.